The primary structure comprises 293 residues: Glutamyl-Q tRNA(Asp) synthetase (293 aa).

L-glutamate-binding positions include 8 to 12 (RFAPS) and Glu44. Residues 11–21 (PSPSGPLHAGS) carry the 'HIGH' region motif. Positions 98, 100, 120, and 124 each coordinate Zn(2+). The L-glutamate site is built by Tyr183 and Arg201. Positions 239–243 (KLSKQ) match the 'KMSKS' region motif. Lys242 is a binding site for ATP.

This sequence belongs to the class-I aminoacyl-tRNA synthetase family. GluQ subfamily. The cofactor is Zn(2+).

In terms of biological role, catalyzes the tRNA-independent activation of glutamate in presence of ATP and the subsequent transfer of glutamate onto a tRNA(Asp). Glutamate is transferred on the 2-amino-5-(4,5-dihydroxy-2-cyclopenten-1-yl) moiety of the queuosine in the wobble position of the QUC anticodon. In Janthinobacterium sp. (strain Marseille) (Minibacterium massiliensis), this protein is Glutamyl-Q tRNA(Asp) synthetase.